Reading from the N-terminus, the 416-residue chain is Peptide chain release factor subunit 1 (416 aa).

This sequence belongs to the eukaryotic release factor 1 family. As to quaternary structure, heterodimer of two subunits, one of which binds GTP.

The protein resides in the cytoplasm. Directs the termination of nascent peptide synthesis (translation) in response to the termination codons UAA, UAG and UGA. This is Peptide chain release factor subunit 1 from Halorubrum lacusprofundi (strain ATCC 49239 / DSM 5036 / JCM 8891 / ACAM 34).